We begin with the raw amino-acid sequence, 77 residues long: ATP synthase subunit c (77 aa).

The next 2 membrane-spanning stretches (helical) occupy residues 13-33 (IATVGYGLAAIGPGIGVGIVA) and 55-75 (FLGIAFSEALALIGLATYFIF).

Belongs to the ATPase C chain family. As to quaternary structure, F-type ATPases have 2 components, F(1) - the catalytic core - and F(0) - the membrane proton channel. F(1) has five subunits: alpha(3), beta(3), gamma(1), delta(1), epsilon(1). F(0) has three main subunits: a(1), b(2) and c(10-14). The alpha and beta chains form an alternating ring which encloses part of the gamma chain. F(1) is attached to F(0) by a central stalk formed by the gamma and epsilon chains, while a peripheral stalk is formed by the delta and b chains.

It localises to the cell membrane. F(1)F(0) ATP synthase produces ATP from ADP in the presence of a proton or sodium gradient. F-type ATPases consist of two structural domains, F(1) containing the extramembraneous catalytic core and F(0) containing the membrane proton channel, linked together by a central stalk and a peripheral stalk. During catalysis, ATP synthesis in the catalytic domain of F(1) is coupled via a rotary mechanism of the central stalk subunits to proton translocation. Functionally, key component of the F(0) channel; it plays a direct role in translocation across the membrane. A homomeric c-ring of between 10-14 subunits forms the central stalk rotor element with the F(1) delta and epsilon subunits. The protein is ATP synthase subunit c of Clavibacter sepedonicus (Clavibacter michiganensis subsp. sepedonicus).